Here is a 232-residue protein sequence, read N- to C-terminus: Ribosomal RNA small subunit methyltransferase G (232 aa).

A disordered region spans residues 1-24; sequence MVDTALHPIPGRRTPPHPRSTLPL. Residues Gly91, Leu96, 142-143, and Arg160 contribute to the S-adenosyl-L-methionine site; that span reads AE.

It belongs to the methyltransferase superfamily. RNA methyltransferase RsmG family.

The protein resides in the cytoplasm. In terms of biological role, specifically methylates the N7 position of guanine in position 518 of 16S rRNA. This Corynebacterium efficiens (strain DSM 44549 / YS-314 / AJ 12310 / JCM 11189 / NBRC 100395) protein is Ribosomal RNA small subunit methyltransferase G.